A 595-amino-acid polypeptide reads, in one-letter code: NADH-quinone oxidoreductase subunit C/D (595 aa).

The interval 1–186 is NADH dehydrogenase I subunit C; that stretch reads MAETDIAMPE…TPYMQDKAKQ (186 aa). The segment at 210-595 is NADH dehydrogenase I subunit D; that stretch reads DFMFLNLGPN…IDVVMADVDR (386 aa).

The protein in the N-terminal section; belongs to the complex I 30 kDa subunit family. In the C-terminal section; belongs to the complex I 49 kDa subunit family. As to quaternary structure, NDH-1 is composed of 13 different subunits. Subunits NuoB, CD, E, F, and G constitute the peripheral sector of the complex.

It is found in the cell inner membrane. It catalyses the reaction a quinone + NADH + 5 H(+)(in) = a quinol + NAD(+) + 4 H(+)(out). NDH-1 shuttles electrons from NADH, via FMN and iron-sulfur (Fe-S) centers, to quinones in the respiratory chain. The immediate electron acceptor for the enzyme in this species is believed to be ubiquinone. Couples the redox reaction to proton translocation (for every two electrons transferred, four hydrogen ions are translocated across the cytoplasmic membrane), and thus conserves the redox energy in a proton gradient. This chain is NADH-quinone oxidoreductase subunit C/D, found in Acinetobacter baumannii (strain AYE).